The sequence spans 477 residues: 3-isopropylmalate dehydratase large subunit (477 aa).

Cys352, Cys413, and Cys416 together coordinate [4Fe-4S] cluster.

Belongs to the aconitase/IPM isomerase family. LeuC type 1 subfamily. In terms of assembly, heterodimer of LeuC and LeuD. [4Fe-4S] cluster is required as a cofactor.

It catalyses the reaction (2R,3S)-3-isopropylmalate = (2S)-2-isopropylmalate. It functions in the pathway amino-acid biosynthesis; L-leucine biosynthesis; L-leucine from 3-methyl-2-oxobutanoate: step 2/4. Catalyzes the isomerization between 2-isopropylmalate and 3-isopropylmalate, via the formation of 2-isopropylmaleate. The polypeptide is 3-isopropylmalate dehydratase large subunit (Pseudomonas putida (strain GB-1)).